The chain runs to 337 residues: DNA-directed RNA polymerase subunit alpha (337 aa).

Positions Met1–Glu233 are alpha N-terminal domain (alpha-NTD). The alpha C-terminal domain (alpha-CTD) stretch occupies residues Gly266–Phe337.

Belongs to the RNA polymerase alpha chain family. In plastids the minimal PEP RNA polymerase catalytic core is composed of four subunits: alpha, beta, beta', and beta''. When a (nuclear-encoded) sigma factor is associated with the core the holoenzyme is formed, which can initiate transcription.

The protein localises to the plastid. Its subcellular location is the chloroplast. It catalyses the reaction RNA(n) + a ribonucleoside 5'-triphosphate = RNA(n+1) + diphosphate. Functionally, DNA-dependent RNA polymerase catalyzes the transcription of DNA into RNA using the four ribonucleoside triphosphates as substrates. This Ceratophyllum demersum (Rigid hornwort) protein is DNA-directed RNA polymerase subunit alpha.